The chain runs to 309 residues: CDK-activating kinase assembly factor MAT1 (309 aa).

Residues 6–50 (CPRCKTTKYRNPSLKLMVNVCGHTLCESCVELLFVRGSGSCQECD) form an RING-type zinc finger. Residues 142–161 (REQEELEEALEMEKHENEQR) enclose the UIM domain.

Associates with CDK7 and cyclin H.

Its subcellular location is the nucleus. Stabilizes the cyclin H-CDK7 complex to form a functional CDK-activating kinase (CAK) enzymatic complex. In Xenopus laevis (African clawed frog), this protein is CDK-activating kinase assembly factor MAT1 (mnat1).